Here is a 697-residue protein sequence, read N- to C-terminus: Elongation factor G (697 aa).

The tr-type G domain occupies 8–283 (EHIRNIGICA…AVVDFLPSPT (276 aa)). GTP contacts are provided by residues 17–24 (AHIDAGKT), 81–85 (DTPGH), and 135–138 (NKMD).

The protein belongs to the TRAFAC class translation factor GTPase superfamily. Classic translation factor GTPase family. EF-G/EF-2 subfamily.

It is found in the cytoplasm. Its function is as follows. Catalyzes the GTP-dependent ribosomal translocation step during translation elongation. During this step, the ribosome changes from the pre-translocational (PRE) to the post-translocational (POST) state as the newly formed A-site-bound peptidyl-tRNA and P-site-bound deacylated tRNA move to the P and E sites, respectively. Catalyzes the coordinated movement of the two tRNA molecules, the mRNA and conformational changes in the ribosome. This is Elongation factor G from Rickettsia massiliae (strain Mtu5).